A 370-amino-acid polypeptide reads, in one-letter code: Peptidyl-prolyl cis-trans isomerase D (370 aa).

A Phosphoserine modification is found at serine 5. Residues 19-183 form the PPIase cyclophilin-type domain; sequence FFDVDIGGER…KLCVIAECGE (165 aa). An N6-acetyllysine modification is found at lysine 171. Residues 185–215 form a chaperone activity region; it reads KEGDDWGIFPKDGSGDSHPDFPEDADVDLKD. Phosphoserine is present on serine 198. The interaction with HSP90AB1 stretch occupies residues 214–370; it reads KDVDKILLIS…EKAAYAKMFA (157 aa). TPR repeat units lie at residues 223-256, 273-306, and 307-340; these read SEDL…VEGS, LSCV…DPSN, and TKAL…APED.

Belongs to the cyclophilin-type PPIase family. PPIase D subfamily. In terms of assembly, identified in ESR1 or NR3C1/GCR steroid receptor-chaperone complexes. Found in HSP90 chaperone complexes with kinase clients LCK or EIF2AK1. Two monomers associate with one HSP90 homodimer. Interacts with HSP90AA1. Interacts with HSP90AB1; PPID and FKBP4 compete for binding to HSP90AB1 and the interaction is mutually exclusive with the PPID:HSPA8 interaction. Interacts with HSPA8; PPID and STIP1 but not FKBP4 compete for binding to HSPA8 and the interaction is mutually exclusive with the PPID:HSP90AB1 interaction. Interacts with S100A1 and S100A2; the interactions dissociate the PPID:HSP90AA1 interaction. Interacts with S100A6. Interacts with MYB, ILF2, XRCC6, RACK1 and RPS3. Interacts with cytoplasmic dynein 1 intermediate chain (DYNC1I1 or DYNC1I2). In terms of processing, the N-terminus is blocked. As to expression, detected in heart, thymis and brain.

The protein resides in the cytoplasm. It localises to the nucleus. The protein localises to the nucleolus. Its subcellular location is the nucleoplasm. It catalyses the reaction [protein]-peptidylproline (omega=180) = [protein]-peptidylproline (omega=0). With respect to regulation, less sensitive to inhibition by cyclosporin A than is CYP-18. Its function is as follows. PPIase that catalyzes the cis-trans isomerization of proline imidic peptide bonds in oligopeptides and may therefore assist protein folding. Proposed to act as a co-chaperone in HSP90 complexes such as in unligated steroid receptors heterocomplexes. Different co-chaperones seem to compete for association with HSP90 thus establishing distinct HSP90-co-chaperone-receptor complexes with the potential to exert tissue-specific receptor activity control. May have a preference for estrogen receptor complexes and is not found in glucocorticoid receptor complexes. May be involved in cytoplasmic dynein-dependent movement of the receptor from the cytoplasm to the nucleus. May regulate MYB by inhibiting its DNA-binding activity. Involved in regulation of AHR signaling by promoting the formation of the AHR:ARNT dimer; the function is independent of HSP90 but requires the chaperone activity. Involved in regulation of UV radiation-induced apoptosis. The sequence is that of Peptidyl-prolyl cis-trans isomerase D from Bos taurus (Bovine).